The chain runs to 379 residues: Endonuclease III homolog 1, chloroplastic (379 aa).

The transit peptide at 1-54 directs the protein to the chloroplast; it reads MILLVNGGAATSIHPNAARFYRIGTMSRQIHGAVSSSKHISLKTQHPLSDSNSE. One can recognise a HhH domain in the interval 244-272; it reads KYDGDIPSSLDDLLSLPGIGPKMAHLILH. The active-site Nucleophile; for N-glycosylase activity is the K265. 4 residues coordinate [4Fe-4S] cluster: C340, C347, C350, and C356.

Belongs to the Nth/MutY family. [4Fe-4S] cluster is required as a cofactor. Expressed at low levels in roots, stems, leaves and flowers.

The protein resides in the plastid. It is found in the chloroplast stroma. The protein localises to the chloroplast nucleoid. It carries out the reaction 2'-deoxyribonucleotide-(2'-deoxyribose 5'-phosphate)-2'-deoxyribonucleotide-DNA = a 3'-end 2'-deoxyribonucleotide-(2,3-dehydro-2,3-deoxyribose 5'-phosphate)-DNA + a 5'-end 5'-phospho-2'-deoxyribonucleoside-DNA + H(+). Functionally, bifunctional DNA N-glycosylase with associated apurinic/apyrimidinic (AP) lyase function that catalyzes the first step in base excision repair (BER), the primary repair pathway for the repair of oxidative DNA damage. The DNA N-glycosylase activity releases the damaged DNA base from DNA by cleaving the N-glycosidic bond, leaving an AP site. The AP lyase activity cleaves the phosphodiester bond 3' to the AP site by a beta-elimination. Primarily recognizes and repairs oxidative base damage of pyrimidines. This chain is Endonuclease III homolog 1, chloroplastic, found in Arabidopsis thaliana (Mouse-ear cress).